A 287-amino-acid chain; its full sequence is Isopentenyl-diphosphate Delta-isomerase 1, chloroplastic (287 aa).

The transit peptide at methionine 1 to serine 51 directs the protein to the chloroplast. Lysine 90 provides a ligand contact to substrate. The Mg(2+) site is built by histidine 94 and histidine 106. Residues leucine 104–leucine 256 form the Nudix hydrolase domain. The substrate site is built by arginine 125 and lysine 129. Residue cysteine 141 is part of the active site. Serine 142 serves as a coordination point for substrate. The Nudix box motif lies at serine 142–glycine 172. Residues glutamate 201 and glutamate 203 each coordinate Mg(2+). The active site involves glutamate 203.

This sequence belongs to the IPP isomerase type 1 family. As to quaternary structure, monomer. The cofactor is Mg(2+). Mainly expressed in roots and trichomes and, to a lower extent, in leaves, flowers and stems.

The protein localises to the plastid. It is found in the chloroplast. The enzyme catalyses isopentenyl diphosphate = dimethylallyl diphosphate. Its pathway is isoprenoid biosynthesis; dimethylallyl diphosphate biosynthesis; dimethylallyl diphosphate from isopentenyl diphosphate: step 1/1. It functions in the pathway porphyrin-containing compound metabolism; chlorophyll biosynthesis. Functionally, catalyzes the 1,3-allylic rearrangement of the homoallylic substrate isopentenyl (IPP) to its highly electrophilic allylic isomer, dimethylallyl diphosphate (DMAPP). The sequence is that of Isopentenyl-diphosphate Delta-isomerase 1, chloroplastic from Cannabis sativa (Hemp).